A 220-amino-acid chain; its full sequence is Protein DGCR6 (220 aa).

The stretch at 76 to 142 (KSLYNQRLRL…EQRAMDQKIV (67 aa)) forms a coiled coil.

The protein belongs to the gonadal family. As to expression, found in all tissues examined with highest expression in liver, heart and skeletal muscle. Lower levels in pancreas and placenta. Weak expression in brain.

It localises to the nucleus. Its function is as follows. May play a role in neural crest cell migration into the third and fourth pharyngeal pouches. The chain is Protein DGCR6 (DGCR6) from Homo sapiens (Human).